Reading from the N-terminus, the 487-residue chain is GTPase Der (487 aa).

EngA-type G domains lie at 3–166 (PVIA…IAEL) and 201–374 (VKLA…ESAT). GTP is bound by residues 9-16 (GRPNVGKS), 56-60 (DTGGI), 118-121 (NKTD), 207-214 (GRPNVGKS), 254-258 (DTAGV), and 319-322 (NKWD). The 85-residue stretch at 375 to 459 (KRISTAMLRR…PIKIEFREGD (85 aa)) folds into the KH-like domain.

It belongs to the TRAFAC class TrmE-Era-EngA-EngB-Septin-like GTPase superfamily. EngA (Der) GTPase family. As to quaternary structure, associates with the 50S ribosomal subunit.

Functionally, GTPase that plays an essential role in the late steps of ribosome biogenesis. This is GTPase Der from Pseudoalteromonas translucida (strain TAC 125).